Consider the following 287-residue polypeptide: Syntaxin-11 (287 aa).

The stretch at Leu-41 to Arg-71 forms a coiled coil. In terms of domain architecture, t-SNARE coiled-coil homology spans Leu-204–Ala-266.

This sequence belongs to the syntaxin family. As to quaternary structure, interacts with the SNARE proteins SNAP-23 and VAMP.

The protein localises to the membrane. It is found in the golgi apparatus. It localises to the trans-Golgi network membrane. In terms of biological role, SNARE that acts to regulate protein transport between late endosomes and the trans-Golgi network. This is Syntaxin-11 (STX11) from Homo sapiens (Human).